The primary structure comprises 67 residues: Beta-defensin 110 (67 aa).

The N-terminal stretch at 1–19 (MKIQLFFFILLFWVTILPA) is a signal peptide. 3 disulfides stabilise this stretch: Cys35–Cys63, Cys42–Cys56, and Cys46–Cys64.

This sequence belongs to the beta-defensin family.

It localises to the secreted. In terms of biological role, has antibacterial activity. The protein is Beta-defensin 110 (DEFB110) of Pan troglodytes (Chimpanzee).